The primary structure comprises 225 residues: Ribonuclease 3 (225 aa).

One can recognise an RNase III domain in the interval 7-129 (IPRLCRTLGY…IIGAVYLDSD (123 aa)). Residue Glu-42 participates in Mg(2+) binding. Residue Asp-46 is part of the active site. 2 residues coordinate Mg(2+): Asp-115 and Glu-118. Glu-118 is a catalytic residue. The DRBM domain occupies 155–225 (DPKTLLQELL…AAQALELIKR (71 aa)).

Belongs to the ribonuclease III family. In terms of assembly, homodimer. Requires Mg(2+) as cofactor.

The protein resides in the cytoplasm. It carries out the reaction Endonucleolytic cleavage to 5'-phosphomonoester.. Digests double-stranded RNA. Involved in the processing of primary rRNA transcript to yield the immediate precursors to the large and small rRNAs (23S and 16S). Processes some mRNAs, and tRNAs when they are encoded in the rRNA operon. Processes pre-crRNA and tracrRNA of type II CRISPR loci if present in the organism. In Shewanella woodyi (strain ATCC 51908 / MS32), this protein is Ribonuclease 3.